Reading from the N-terminus, the 156-residue chain is ATP synthase subunit b (156 aa).

Residues 7-27 traverse the membrane as a helical segment; that stretch reads LIAQFVVFFILAGFTMKFVWP.

Belongs to the ATPase B chain family. F-type ATPases have 2 components, F(1) - the catalytic core - and F(0) - the membrane proton channel. F(1) has five subunits: alpha(3), beta(3), gamma(1), delta(1), epsilon(1). F(0) has three main subunits: a(1), b(2) and c(10-14). The alpha and beta chains form an alternating ring which encloses part of the gamma chain. F(1) is attached to F(0) by a central stalk formed by the gamma and epsilon chains, while a peripheral stalk is formed by the delta and b chains.

Its subcellular location is the cell inner membrane. F(1)F(0) ATP synthase produces ATP from ADP in the presence of a proton or sodium gradient. F-type ATPases consist of two structural domains, F(1) containing the extramembraneous catalytic core and F(0) containing the membrane proton channel, linked together by a central stalk and a peripheral stalk. During catalysis, ATP synthesis in the catalytic domain of F(1) is coupled via a rotary mechanism of the central stalk subunits to proton translocation. Functionally, component of the F(0) channel, it forms part of the peripheral stalk, linking F(1) to F(0). The polypeptide is ATP synthase subunit b (Herminiimonas arsenicoxydans).